A 121-amino-acid chain; its full sequence is Parathyroid hormone 4 (121 aa).

An N-terminal signal peptide occupies residues 1–24; it reads MLKMQRSQQRVALMMLMVVAAVHC. The propeptide occupies 25-29; it reads QESES. The tract at residues 77 to 97 is disordered; sequence RSRGAQLYSQPGREESSGGQK.

It belongs to the parathyroid hormone family. In terms of tissue distribution, specifically expressed in a bilateral cluster of neurons in the dorsal region of the periventricular hypothalamus. Their axons project through the midbrain and hindbrain and down the spinal cord.

The protein resides in the secreted. Neuroendocrine peptide which is produced by a subset of neurons in the hypothalamus. Activates the G-protein coupled receptors pth1ra, pth1rb and pth2r with similar affinity. Receptor binding stimulates intracellular cAMP production. Plays a role in bone mineralization by regulating expression of factors involved in phosphate homeostasis. Important for embryonic bone development. This is Parathyroid hormone 4 from Danio rerio (Zebrafish).